Here is a 136-residue protein sequence, read N- to C-terminus: Transcription antitermination protein NusB (136 aa).

Belongs to the NusB family.

In terms of biological role, involved in transcription antitermination. Required for transcription of ribosomal RNA (rRNA) genes. Binds specifically to the boxA antiterminator sequence of the ribosomal RNA (rrn) operons. This is Transcription antitermination protein NusB from Kineococcus radiotolerans (strain ATCC BAA-149 / DSM 14245 / SRS30216).